Consider the following 619-residue polypeptide: Pescadillo homolog (619 aa).

Residues Ala-303–Val-324 form a disordered region. Over residues Thr-312–Val-324 the composition is skewed to acidic residues. One can recognise a BRCT domain in the interval Pro-353 to Pro-452. The segment at Leu-456–Glu-567 is disordered. Coiled coils occupy residues Asn-472–Lys-560 and Met-588–Val-619. Residues Glu-480–Asp-522 show a composition bias toward acidic residues. Over residues Leu-523–Ser-539 the composition is skewed to basic and acidic residues.

This sequence belongs to the pescadillo family. In terms of assembly, component of the NOP7 complex, composed of ERB1, NOP7 and YTM1. The complex is held together by ERB1, which interacts with NOP7 via its N-terminal domain and with YTM1 via a high-affinity interaction between the seven-bladed beta-propeller domains of the 2 proteins. The NOP7 complex associates with the 66S pre-ribosome.

The protein localises to the nucleus. It is found in the nucleolus. It localises to the nucleoplasm. Its function is as follows. Component of the NOP7 complex, which is required for maturation of the 25S and 5.8S ribosomal RNAs and formation of the 60S ribosome. This chain is Pescadillo homolog, found in Lodderomyces elongisporus (strain ATCC 11503 / CBS 2605 / JCM 1781 / NBRC 1676 / NRRL YB-4239) (Yeast).